The chain runs to 578 residues: Oxygen sensor histidine kinase response regulator DevS/DosS (578 aa).

2 GAF domains span residues 63–200 (DLEA…GIAV) and 231–369 (EPAT…ALAW). A heme-binding site is contributed by histidine 149. Residues 383–578 (VLTDRDRIAR…VLRWSAPLSQ (196 aa)) enclose the Histidine kinase domain. Histidine 395 is modified (phosphohistidine; by autocatalysis).

Requires Mg(2+) as cofactor. Heme serves as cofactor.

It localises to the cytoplasm. The enzyme catalyses ATP + protein L-histidine = ADP + protein N-phospho-L-histidine.. Member of the two-component regulatory system DevR/DevS (DosR/DosS) involved in onset of the dormancy response. Regulates an approximately 48-member regulon. Required for full induction of the DevR (DosR) regulon; acts later than DosT to positively regulate expression of the DevR regulon during adaptation to anaerobiosis. Characterized as an oxygen sensor; O(2) acts as a switch, with O(2)-bound Fe(2+) protein inactive in autophosphorylation. Has also been suggested to act as a redox sensor, or perhaps as a dual oxygen/redox sensor. Donates a phosphate group to transcriptional regulator DevR (DosR). The polypeptide is Oxygen sensor histidine kinase response regulator DevS/DosS (devS) (Mycobacterium tuberculosis (strain CDC 1551 / Oshkosh)).